Reading from the N-terminus, the 1406-residue chain is DNA-directed RNA polymerase subunit beta' (1406 aa).

Zn(2+) contacts are provided by cysteine 70, cysteine 72, cysteine 85, and cysteine 88. Mg(2+) is bound by residues aspartate 460, aspartate 462, and aspartate 464. Cysteine 814, cysteine 889, cysteine 896, and cysteine 899 together coordinate Zn(2+).

This sequence belongs to the RNA polymerase beta' chain family. In terms of assembly, the RNAP catalytic core consists of 2 alpha, 1 beta, 1 beta' and 1 omega subunit. When a sigma factor is associated with the core the holoenzyme is formed, which can initiate transcription. Requires Mg(2+) as cofactor. It depends on Zn(2+) as a cofactor.

The enzyme catalyses RNA(n) + a ribonucleoside 5'-triphosphate = RNA(n+1) + diphosphate. Functionally, DNA-dependent RNA polymerase catalyzes the transcription of DNA into RNA using the four ribonucleoside triphosphates as substrates. The sequence is that of DNA-directed RNA polymerase subunit beta' from Psychromonas ingrahamii (strain DSM 17664 / CCUG 51855 / 37).